The primary structure comprises 127 residues: Aspartate 1-decarboxylase (127 aa).

Catalysis depends on Ser25, which acts as the Schiff-base intermediate with substrate; via pyruvic acid. Residue Ser25 is modified to Pyruvic acid (Ser). Thr57 contacts substrate. The active-site Proton donor is Tyr58. Position 73 to 75 (73 to 75) interacts with substrate; sequence GSA.

This sequence belongs to the PanD family. In terms of assembly, heterooctamer of four alpha and four beta subunits. The cofactor is pyruvate. Is synthesized initially as an inactive proenzyme, which is activated by self-cleavage at a specific serine bond to produce a beta-subunit with a hydroxyl group at its C-terminus and an alpha-subunit with a pyruvoyl group at its N-terminus.

Its subcellular location is the cytoplasm. It carries out the reaction L-aspartate + H(+) = beta-alanine + CO2. The protein operates within cofactor biosynthesis; (R)-pantothenate biosynthesis; beta-alanine from L-aspartate: step 1/1. In terms of biological role, catalyzes the pyruvoyl-dependent decarboxylation of aspartate to produce beta-alanine. The sequence is that of Aspartate 1-decarboxylase from Laribacter hongkongensis (strain HLHK9).